Consider the following 407-residue polypeptide: Arginine deiminase (407 aa).

C397 serves as the catalytic Amidino-cysteine intermediate.

Belongs to the arginine deiminase family.

It localises to the cytoplasm. It carries out the reaction L-arginine + H2O = L-citrulline + NH4(+). The protein operates within amino-acid degradation; L-arginine degradation via ADI pathway; carbamoyl phosphate from L-arginine: step 1/2. This Vibrio parahaemolyticus serotype O3:K6 (strain RIMD 2210633) protein is Arginine deiminase.